The chain runs to 95 residues: Aspartyl/glutamyl-tRNA(Asn/Gln) amidotransferase subunit C (95 aa).

Belongs to the GatC family. As to quaternary structure, heterotrimer of A, B and C subunits.

The enzyme catalyses L-glutamyl-tRNA(Gln) + L-glutamine + ATP + H2O = L-glutaminyl-tRNA(Gln) + L-glutamate + ADP + phosphate + H(+). It carries out the reaction L-aspartyl-tRNA(Asn) + L-glutamine + ATP + H2O = L-asparaginyl-tRNA(Asn) + L-glutamate + ADP + phosphate + 2 H(+). In terms of biological role, allows the formation of correctly charged Asn-tRNA(Asn) or Gln-tRNA(Gln) through the transamidation of misacylated Asp-tRNA(Asn) or Glu-tRNA(Gln) in organisms which lack either or both of asparaginyl-tRNA or glutaminyl-tRNA synthetases. The reaction takes place in the presence of glutamine and ATP through an activated phospho-Asp-tRNA(Asn) or phospho-Glu-tRNA(Gln). In Pseudomonas putida (strain W619), this protein is Aspartyl/glutamyl-tRNA(Asn/Gln) amidotransferase subunit C.